The sequence spans 298 residues: Mitochondrial 2-oxodicarboxylate carrier (298 aa).

Solcar repeat units lie at residues H10–F99, S106–N195, and L204–W293. Transmembrane regions (helical) follow at residues V16–V36, F69–V88, P112–V132, G166–F186, L204–N224, and L276–E296.

The protein belongs to the mitochondrial carrier (TC 2.A.29) family. Widely expressed.

It is found in the mitochondrion inner membrane. The catalysed reaction is 2-oxoadipate(in) + 2-oxoglutarate(out) = 2-oxoadipate(out) + 2-oxoglutarate(in). It carries out the reaction hexanedioate(in) + 2-oxoglutarate(out) = hexanedioate(out) + 2-oxoglutarate(in). The enzyme catalyses L-2-aminoadipate(in) + 2-oxoglutarate(out) = L-2-aminoadipate(out) + 2-oxoglutarate(in). It catalyses the reaction glutarate(in) + 2-oxoglutarate(out) = glutarate(out) + 2-oxoglutarate(in). The catalysed reaction is 2-oxoheptanedioate(in) + 2-oxoglutarate(out) = 2-oxoheptanedioate(out) + 2-oxoglutarate(in). It carries out the reaction heptanedioate(in) + 2-oxoglutarate(out) = heptanedioate(out) + 2-oxoglutarate(in). The enzyme catalyses citrate(in) + 2-oxoglutarate(out) = citrate(out) + 2-oxoglutarate(in). Transports dicarboxylates across the inner membranes of mitochondria by a counter-exchange mechanism. Can transport 2-oxoadipate (2-oxohexanedioate), 2-oxoglutarate, adipate (hexanedioate), glutarate, and to a lesser extent, pimelate (heptanedioate), 2-oxopimelate (2-oxoheptanedioate), 2-aminoadipate (2-aminohexanedioate), oxaloacetate, and citrate. Plays a central role in catabolism of lysine, hydroxylysine, and tryptophan, by transporting common metabolite intermediates (such as 2-oxoadipate) into the mitochondria, where it is converted into acetyl-CoA and can enter the citric acid (TCA) cycle. The protein is Mitochondrial 2-oxodicarboxylate carrier (Slc25a21) of Rattus norvegicus (Rat).